The chain runs to 246 residues: Hydroxyacylglutathione hydrolase (246 aa).

Residues His58, His60, Asp62, His63, His117, Asp137, and His175 each coordinate Zn(2+).

Belongs to the metallo-beta-lactamase superfamily. Glyoxalase II family. In terms of assembly, monomer. Zn(2+) is required as a cofactor.

It carries out the reaction an S-(2-hydroxyacyl)glutathione + H2O = a 2-hydroxy carboxylate + glutathione + H(+). It functions in the pathway secondary metabolite metabolism; methylglyoxal degradation; (R)-lactate from methylglyoxal: step 2/2. Functionally, thiolesterase that catalyzes the hydrolysis of S-D-lactoyl-glutathione to form glutathione and D-lactic acid. This chain is Hydroxyacylglutathione hydrolase, found in Prochlorococcus marinus (strain MIT 9312).